Consider the following 296-residue polypeptide: Ribosome biogenesis GTPase A (296 aa).

The region spanning 14-178 (RRQVTEKLKL…LLDTPGILWP (165 aa)) is the CP-type G domain. Residues 58-61 (NKAD), 130-135 (NVGKST), and Gly-174 each bind GTP.

Belongs to the TRAFAC class YlqF/YawG GTPase family. MTG1 subfamily. Interacts with ctc. Interacts with the immature 50S ribosome subunit. 2 molecules of rbgA bind to one 50S subunit.

It is found in the cytoplasm. Essential protein that is required for a late step of 50S ribosomal subunit assembly. Has GTPase activity that is stimulated by interaction with the immature 50S ribosome subunit. Binds to the 23S rRNA. Required for the association of ribosomal proteins rplP and rpmA with the large subunit. The sequence is that of Ribosome biogenesis GTPase A from Bacillus cereus (strain ATCC 14579 / DSM 31 / CCUG 7414 / JCM 2152 / NBRC 15305 / NCIMB 9373 / NCTC 2599 / NRRL B-3711).